Consider the following 999-residue polypeptide: Receptor-like protein kinase 5 (999 aa).

Residues 1 to 14 (MLYCLILLLCLSST) form the signal peptide. The Extracellular portion of the chain corresponds to 15-621 (YLPSLSLNQD…LCRKITRSKN (607 aa)). LRR repeat units lie at residues 90 to 112 (SLHS…DFDT), 115 to 137 (NLIS…LPFN), 140 to 161 (NLKF…SFGE), 164 to 186 (KLES…LGNV), and 188 to 208 (TLKE…PSQL). N-linked (GlcNAc...) asparagine glycosylation is found at Asn98 and Asn102. N-linked (GlcNAc...) asparagine glycans are attached at residues Asn150 and Asn185. The N-linked (GlcNAc...) asparagine glycan is linked to Asn210. LRR repeat units follow at residues 213–236 (ELQV…SRLT) and 237–259 (SLVN…ITQL). N-linked (GlcNAc...) asparagine glycans are attached at residues Asn269 and Asn282. 12 LRR repeats span residues 285–307 (TLKR…LNLL), 308–330 (NLES…ITRS), 332–353 (TLSE…QLGA), 356–378 (PLQY…VCGE), 380–402 (KLEY…LGKC), 404–427 (SLTR…WGLP), 428–450 (RLSL…IIGA), 452–474 (NLSN…IGSL), 500–523 (QLSR…RGWK), 524–546 (NLNE…VGIL), 548–569 (VLNY…ELQN), and 571–593 (KLNV…YANK). The N-linked (GlcNAc...) asparagine glycan is linked to Asn452. N-linked (GlcNAc...) asparagine glycosylation occurs at Asn576. The chain crosses the membrane as a helical span at residues 622 to 641 (IGYVWILLTIFLLAGLVFVV). The Cytoplasmic portion of the chain corresponds to 642–999 (GIVMFIAKCR…PYYTEDLNSV (358 aa)). The 286-residue stretch at 683 to 968 (LDEKNVIGFG…KVVIMLQEVS (286 aa)) folds into the Protein kinase domain. Residues 689-697 (IGFGSSGKV) and Lys711 each bind ATP. Phosphotyrosine occurs at positions 766 and 806. The active-site Proton acceptor is Asp819. Residue Ser856 is modified to Phosphoserine. Phosphotyrosine is present on residues Tyr864 and Tyr871. A Phosphothreonine modification is found at Thr872. The disordered stretch occupies residues 972–999 (PCSSPNTSKRSKTGGKLSPYYTEDLNSV).

It belongs to the protein kinase superfamily. Ser/Thr protein kinase family. As to quaternary structure, interacts with CST. Binds to IDA. The cofactor is Mg(2+). Requires Mn(2+) as cofactor. In terms of processing, autophosphorylated on Ser, Thr and Tyr residues. In terms of tissue distribution, expressed in roots and rosettes. Expressed at the base of petioles and pedicels, and in the abscission zones of the floral organs.

It localises to the cell membrane. The catalysed reaction is L-seryl-[protein] + ATP = O-phospho-L-seryl-[protein] + ADP + H(+). It catalyses the reaction L-threonyl-[protein] + ATP = O-phospho-L-threonyl-[protein] + ADP + H(+). It carries out the reaction L-tyrosyl-[protein] + ATP = O-phospho-L-tyrosyl-[protein] + ADP + H(+). In terms of biological role, receptor with a dual specificity kinase activity acting on both serine/threonine- and tyrosine-containing substrates that controls floral organ abscission. May interact with the 'INFLORESCENCE DEFICIENT IN ABSCISSION' (IDA) ligands family. The protein is Receptor-like protein kinase 5 (RLK5) of Arabidopsis thaliana (Mouse-ear cress).